A 200-amino-acid polypeptide reads, in one-letter code: Adenylate kinase (200 aa).

10 to 15 is a binding site for ATP; the sequence is GAGKGT. The tract at residues 30–59 is NMP; that stretch reads STGDMLRAAVAAETPVGLEAKAIMESGGLV. AMP-binding positions include T31, R36, 57-59, 85-88, and Q92; these read GLV and GFPR. Positions 126–142 are LID; that stretch reads KRAEETAARGQPVRKDD. An ATP-binding site is contributed by R127. R139 and R150 together coordinate AMP. Position 178 (K178) interacts with ATP.

Belongs to the adenylate kinase family. In terms of assembly, monomer.

It localises to the cytoplasm. The enzyme catalyses AMP + ATP = 2 ADP. It participates in purine metabolism; AMP biosynthesis via salvage pathway; AMP from ADP: step 1/1. In terms of biological role, catalyzes the reversible transfer of the terminal phosphate group between ATP and AMP. Plays an important role in cellular energy homeostasis and in adenine nucleotide metabolism. The chain is Adenylate kinase from Methylorubrum extorquens (strain PA1) (Methylobacterium extorquens).